A 251-amino-acid polypeptide reads, in one-letter code: Small ribosomal subunit protein uS2 (251 aa).

The protein belongs to the universal ribosomal protein uS2 family.

This chain is Small ribosomal subunit protein uS2, found in Chlorobium chlorochromatii (strain CaD3).